Here is a 219-residue protein sequence, read N- to C-terminus: Orotate phosphoribosyltransferase (219 aa).

K26 contacts 5-phospho-alpha-D-ribose 1-diphosphate. Residue 34–35 (FF) participates in orotate binding. Residues 72–73 (YK), R98, K99, K102, H104, and 124–132 (DDVITAGTA) contribute to the 5-phospho-alpha-D-ribose 1-diphosphate site. 2 residues coordinate orotate: T128 and R156.

It belongs to the purine/pyrimidine phosphoribosyltransferase family. PyrE subfamily. Homodimer. Requires Mg(2+) as cofactor.

The enzyme catalyses orotidine 5'-phosphate + diphosphate = orotate + 5-phospho-alpha-D-ribose 1-diphosphate. The protein operates within pyrimidine metabolism; UMP biosynthesis via de novo pathway; UMP from orotate: step 1/2. Catalyzes the transfer of a ribosyl phosphate group from 5-phosphoribose 1-diphosphate to orotate, leading to the formation of orotidine monophosphate (OMP). The chain is Orotate phosphoribosyltransferase from Xylella fastidiosa (strain Temecula1 / ATCC 700964).